Here is a 200-residue protein sequence, read N- to C-terminus: Large ribosomal subunit protein uL4 (200 aa).

The disordered stretch occupies residues 42 to 65; sequence TRAQKTRSEVSGGGAKPWRQKGTG.

The protein belongs to the universal ribosomal protein uL4 family. Part of the 50S ribosomal subunit.

One of the primary rRNA binding proteins, this protein initially binds near the 5'-end of the 23S rRNA. It is important during the early stages of 50S assembly. It makes multiple contacts with different domains of the 23S rRNA in the assembled 50S subunit and ribosome. Its function is as follows. Forms part of the polypeptide exit tunnel. In Vibrio vulnificus (strain CMCP6), this protein is Large ribosomal subunit protein uL4.